A 309-amino-acid chain; its full sequence is MVAVLQSTLPIIFSMEFIMGTLGNGFIFLIVCIDWVQRRKISLVDQIRTALAISRIALIWLIFLDWWVSVHYPALHETGKMLSTYLISWTVINHCNFWLTANLSILYFLKIANFSNIIFLYLKFRSKNVVLVTLLVSLFFLFLNTVIIKIFSDVCFDSVQRNVSQIFIMYNHEQICKFLSFTNPMFTFIPFVMSTVMFSLLIFSLWRHLKNMQHTAKGCRDISTTVHIRALQTIIVSVVLYTIFFLSFFVKVWSFVSPERYLIFLFVWALGNAVFSAHPFVMILVNRRLRLASLSLIFWLWYRFKNIEV.

The Extracellular segment spans residues 1-10 (MVAVLQSTLP). A helical membrane pass occupies residues 11-31 (IIFSMEFIMGTLGNGFIFLIV). At 32-55 (CIDWVQRRKISLVDQIRTALAISR) the chain is on the cytoplasmic side. Residues 56-76 (IALIWLIFLDWWVSVHYPALH) traverse the membrane as a helical segment. Over 77–80 (ETGK) the chain is Extracellular. Residues 81–101 (MLSTYLISWTVINHCNFWLTA) traverse the membrane as a helical segment. Topologically, residues 102–127 (NLSILYFLKIANFSNIIFLYLKFRSK) are cytoplasmic. Residues 128-148 (NVVLVTLLVSLFFLFLNTVII) traverse the membrane as a helical segment. Over 149–185 (KIFSDVCFDSVQRNVSQIFIMYNHEQICKFLSFTNPM) the chain is Extracellular. A glycan (N-linked (GlcNAc...) asparagine) is linked at Asn162. Residues 186-206 (FTFIPFVMSTVMFSLLIFSLW) form a helical membrane-spanning segment. The Cytoplasmic portion of the chain corresponds to 207-229 (RHLKNMQHTAKGCRDISTTVHIR). The helical transmembrane segment at 230-250 (ALQTIIVSVVLYTIFFLSFFV) threads the bilayer. Residues 251–262 (KVWSFVSPERYL) lie on the Extracellular side of the membrane. Residues 263–283 (IFLFVWALGNAVFSAHPFVMI) form a helical membrane-spanning segment. At 284–309 (LVNRRLRLASLSLIFWLWYRFKNIEV) the chain is on the cytoplasmic side.

Belongs to the G-protein coupled receptor T2R family.

The protein resides in the membrane. In terms of biological role, putative taste receptor which may play a role in the perception of bitterness. The protein is Taste receptor type 2 member 113 of Mus musculus (Mouse).